The sequence spans 341 residues: S-adenosylmethionine:tRNA ribosyltransferase-isomerase (341 aa).

Belongs to the QueA family. In terms of assembly, monomer.

The protein localises to the cytoplasm. It carries out the reaction 7-aminomethyl-7-carbaguanosine(34) in tRNA + S-adenosyl-L-methionine = epoxyqueuosine(34) in tRNA + adenine + L-methionine + 2 H(+). Its pathway is tRNA modification; tRNA-queuosine biosynthesis. Its function is as follows. Transfers and isomerizes the ribose moiety from AdoMet to the 7-aminomethyl group of 7-deazaguanine (preQ1-tRNA) to give epoxyqueuosine (oQ-tRNA). In Chlorobium chlorochromatii (strain CaD3), this protein is S-adenosylmethionine:tRNA ribosyltransferase-isomerase.